The primary structure comprises 301 residues: Probable 5-dehydro-4-deoxyglucarate dehydratase (301 aa).

This sequence belongs to the DapA family.

It carries out the reaction 5-dehydro-4-deoxy-D-glucarate + H(+) = 2,5-dioxopentanoate + CO2 + H2O. The protein operates within carbohydrate acid metabolism; D-glucarate degradation; 2,5-dioxopentanoate from D-glucarate: step 2/2. This Allorhizobium ampelinum (strain ATCC BAA-846 / DSM 112012 / S4) (Agrobacterium vitis (strain S4)) protein is Probable 5-dehydro-4-deoxyglucarate dehydratase.